The primary structure comprises 225 residues: Cytochrome c oxidase subunit 2 (225 aa).

Residues 1 to 26 (MMTWSQMSFSDMNSPIMEQMVFFHDH) lie on the Mitochondrial intermembrane side of the membrane. Residues 27 to 48 (SMMIILMITILTIYMITNIMMN) form a helical membrane-spanning segment. The Mitochondrial matrix portion of the chain corresponds to 49 to 62 (NLLSRSMMEGQEIE). Residues 63-82 (IIWTIIPAITLIFIAIPSLH) form a helical membrane-spanning segment. Over 83 to 225 (LLYLTDETFN…KNFINFINSS (143 aa)) the chain is Mitochondrial intermembrane. Cu cation is bound by residues His160, Cys195, Glu197, Cys199, His203, and Met206. Glu197 contributes to the Mg(2+) binding site.

The protein belongs to the cytochrome c oxidase subunit 2 family. In terms of assembly, component of the cytochrome c oxidase (complex IV, CIV), a multisubunit enzyme composed of a catalytic core of 3 subunits and several supernumerary subunits. The complex exists as a monomer or a dimer and forms supercomplexes (SCs) in the inner mitochondrial membrane with ubiquinol-cytochrome c oxidoreductase (cytochrome b-c1 complex, complex III, CIII). Requires Cu cation as cofactor.

Its subcellular location is the mitochondrion inner membrane. It carries out the reaction 4 Fe(II)-[cytochrome c] + O2 + 8 H(+)(in) = 4 Fe(III)-[cytochrome c] + 2 H2O + 4 H(+)(out). Functionally, component of the cytochrome c oxidase, the last enzyme in the mitochondrial electron transport chain which drives oxidative phosphorylation. The respiratory chain contains 3 multisubunit complexes succinate dehydrogenase (complex II, CII), ubiquinol-cytochrome c oxidoreductase (cytochrome b-c1 complex, complex III, CIII) and cytochrome c oxidase (complex IV, CIV), that cooperate to transfer electrons derived from NADH and succinate to molecular oxygen, creating an electrochemical gradient over the inner membrane that drives transmembrane transport and the ATP synthase. Cytochrome c oxidase is the component of the respiratory chain that catalyzes the reduction of oxygen to water. Electrons originating from reduced cytochrome c in the intermembrane space (IMS) are transferred via the dinuclear copper A center (CU(A)) of subunit 2 and heme A of subunit 1 to the active site in subunit 1, a binuclear center (BNC) formed by heme A3 and copper B (CU(B)). The BNC reduces molecular oxygen to 2 water molecules using 4 electrons from cytochrome c in the IMS and 4 protons from the mitochondrial matrix. The chain is Cytochrome c oxidase subunit 2 (COII) from Rhipicephalus sanguineus (Brown dog tick).